Here is a 162-residue protein sequence, read N- to C-terminus: Cytochrome B pre-mRNA-processing protein 6 (162 aa).

Ser-2 carries the N-acetylserine modification. Thr-97 bears the Phosphothreonine mark.

It is found in the mitochondrion. Its function is as follows. This protein is involved in processing of the 5' terminus and the intervening sequences of cytochrome b pre-mRNA. The chain is Cytochrome B pre-mRNA-processing protein 6 (CBP6) from Saccharomyces cerevisiae (strain ATCC 204508 / S288c) (Baker's yeast).